Here is a 116-residue protein sequence, read N- to C-terminus: Large ribosomal subunit protein bL20 (116 aa).

The protein belongs to the bacterial ribosomal protein bL20 family.

Its function is as follows. Binds directly to 23S ribosomal RNA and is necessary for the in vitro assembly process of the 50S ribosomal subunit. It is not involved in the protein synthesizing functions of that subunit. The chain is Large ribosomal subunit protein bL20 from Bacteroides fragilis (strain ATCC 25285 / DSM 2151 / CCUG 4856 / JCM 11019 / LMG 10263 / NCTC 9343 / Onslow / VPI 2553 / EN-2).